A 274-amino-acid chain; its full sequence is 4-deoxy-L-threo-5-hexosulose-uronate ketol-isomerase (274 aa).

Zn(2+) contacts are provided by His-192, His-194, Glu-199, and His-241.

Belongs to the KduI family. Requires Zn(2+) as cofactor.

The enzyme catalyses 5-dehydro-4-deoxy-D-glucuronate = 3-deoxy-D-glycero-2,5-hexodiulosonate. It functions in the pathway glycan metabolism; pectin degradation; 2-dehydro-3-deoxy-D-gluconate from pectin: step 4/5. Catalyzes the isomerization of 5-dehydro-4-deoxy-D-glucuronate to 3-deoxy-D-glycero-2,5-hexodiulosonate. The sequence is that of 4-deoxy-L-threo-5-hexosulose-uronate ketol-isomerase from Shigella boydii serotype 18 (strain CDC 3083-94 / BS512).